The primary structure comprises 680 residues: Penicillin-binding protein 2B (680 aa).

The Cytoplasmic portion of the chain corresponds to Met1 to Ser8. Residues Ile9 to Gly29 traverse the membrane as a helical segment. Topologically, residues Arg30–Asn680 are extracellular. Ser386 (acyl-ester intermediate) is an active-site residue.

The protein belongs to the transpeptidase family. As to quaternary structure, interacts with MreC in the elongasome.

Its subcellular location is the cell membrane. In terms of biological role, a transpeptidase that forms peptide cross-links between adjacent glycan strands in cell wall peptidoglycan (PG). Part of the elongasome machinery that synthesizes peripheral PG. This chain is Penicillin-binding protein 2B, found in Streptococcus pneumoniae serotype 2 (strain D39 / NCTC 7466).